A 130-amino-acid polypeptide reads, in one-letter code: Albumin-1 A (130 aa).

An N-terminal signal peptide occupies residues 1–26; sequence MASVKLASLIVLFATLGMFLTKNVGA. 3 disulfide bridges follow: C29–C46, C33–C48, and C41–C58. 2 propeptides span residues 64 to 69 and 123 to 130; these read VFLRTN and LLKSVSTA.

In terms of processing, the C-terminal glycine may be removed from PA1b. Major component of both the cotyledons and embryonic axes of mature seeds.

Functionally, PA1b binds to basic 7S globulin (BG) and stimulates its phosphorylation activity. Involved in the signal transduction system to regulate the growth and differentiation as a hormone peptide. Toxic to various insects through binding to a high affinity binding site in the insect gut. This chain is Albumin-1 A, found in Pisum sativum (Garden pea).